Here is a 447-residue protein sequence, read N- to C-terminus: Glutamate--tRNA ligase 1 (447 aa).

The 'HIGH' region signature appears at 10–20; that stretch reads PSPTGMLHVGN. A 'KMSKS' region motif is present at residues 240–244; it reads KISKR. K243 contributes to the ATP binding site.

This sequence belongs to the class-I aminoacyl-tRNA synthetase family. Glutamate--tRNA ligase type 1 subfamily. Monomer.

The protein resides in the cytoplasm. It catalyses the reaction tRNA(Glu) + L-glutamate + ATP = L-glutamyl-tRNA(Glu) + AMP + diphosphate. In terms of biological role, catalyzes the attachment of glutamate to tRNA(Glu) in a two-step reaction: glutamate is first activated by ATP to form Glu-AMP and then transferred to the acceptor end of tRNA(Glu). This Rickettsia rickettsii (strain Sheila Smith) protein is Glutamate--tRNA ligase 1.